A 319-amino-acid polypeptide reads, in one-letter code: Small ribosomal subunit protein mS35 (319 aa).

The transit peptide at 1-30 directs the protein to the mitochondrion; the sequence is MKVPLGLWKVSRGNLWSTQKRVLTMSRCLN.

The protein belongs to the mitochondrion-specific ribosomal protein mS35 family. In terms of assembly, component of the mitochondrial small ribosomal subunit (mt-SSU). Mature yeast 74S mitochondrial ribosomes consist of a small (37S) and a large (54S) subunit. The 37S small subunit contains a 15S ribosomal RNA (15S mt-rRNA) and 34 different proteins. The 54S large subunit contains a 21S rRNA (21S mt-rRNA) and 46 different proteins.

Its subcellular location is the mitochondrion. Its function is as follows. Component of the mitochondrial ribosome (mitoribosome), a dedicated translation machinery responsible for the synthesis of mitochondrial genome-encoded proteins, including at least some of the essential transmembrane subunits of the mitochondrial respiratory chain. The mitoribosomes are attached to the mitochondrial inner membrane and translation products are cotranslationally integrated into the membrane. The sequence is that of Small ribosomal subunit protein mS35 (RSM24) from Saccharomyces cerevisiae (strain ATCC 204508 / S288c) (Baker's yeast).